Reading from the N-terminus, the 288-residue chain is ATP synthase gamma chain (288 aa).

This sequence belongs to the ATPase gamma chain family. In terms of assembly, F-type ATPases have 2 components, CF(1) - the catalytic core - and CF(0) - the membrane proton channel. CF(1) has five subunits: alpha(3), beta(3), gamma(1), delta(1), epsilon(1). CF(0) has three main subunits: a, b and c.

Its subcellular location is the cell inner membrane. In terms of biological role, produces ATP from ADP in the presence of a proton gradient across the membrane. The gamma chain is believed to be important in regulating ATPase activity and the flow of protons through the CF(0) complex. The protein is ATP synthase gamma chain of Paracidovorax citrulli (strain AAC00-1) (Acidovorax citrulli).